The following is an 875-amino-acid chain: ATP-dependent helicase Lhr-Core (875 aa).

ATP contacts are provided by glutamine 35, lysine 58, threonine 59, aspartate 173, glutamate 174, isoleucine 355, arginine 372, and histidine 375. The Helicase ATP-binding domain maps to 39-230; that stretch reads IPLIKQNYNV…FLVGKDREYR (192 aa). Residues 173 to 176 carry the DEIH box motif; the sequence is DEIH. Residues 247–419 enclose the Helicase C-terminal domain; the sequence is PVKDLVHSSE…SIHIPKNPLD (173 aa). The interval 420–506 is WH domain; sequence VLSQIIVSAS…IFYTNSGTIP (87 aa). A domain 4 region spans residues 507-875; sequence DEAMISVVTE…VNIELEYTSV (369 aa).

This sequence belongs to the Lhr helicase family. Lhr-Core subfamily. Monomer and homodimer. The monomeric form has helicase, ATPase and strand annealing activities, while the dimeric form only has ATPAse and strand annealing activities. Interacts with DNA topoisomerase 3 (topA).

It carries out the reaction Couples ATP hydrolysis with the unwinding of duplex DNA by translocating in the 3'-5' direction.. The catalysed reaction is ATP + H2O = ADP + phosphate + H(+). Its activity is regulated as follows. DNA topoisomerase 3 (topA) inhibits helicase activity on Holliday junctions (HJ) but has no effect on ATPase activity. DNA helicase that translocates in a 3'-5' direction on single-stranded (ss)DNA, probably involved in DNA repair. Unwinds DNA in a 3'-5' direction, unwinding is ATP-dependent, acts preferentially on fork and 3'-tailed DNA; bubble and blunt-ended double-stranded (ds)DNA are not substrates. Has winding and unwinding activity, unwinds Holliday junction (HJ) DNA in the presence of ATP, the main product is forked DNA, single-stranded binding protein (SSB) does not stimulate activity. Anneals complementary oligonucleotides in an ATP-independent manner to form HJ and fork structures, thus can perform strand exchange. Preferentially binds HJ, forked and ssDNA, dsDNA is bound less well. LhrC-Core (Hel112) inhibits the exonuclease activity of the HerA-NurA complex on ss- and dsDNA, has no effect on ssDNA nicking by NurA; HerA-NurA are involved in DNA end-resection during DNA double-strand break repair. The sequence is that of ATP-dependent helicase Lhr-Core from Saccharolobus solfataricus (strain ATCC 35092 / DSM 1617 / JCM 11322 / P2) (Sulfolobus solfataricus).